The sequence spans 887 residues: Alanine--tRNA ligase (887 aa).

Zn(2+) is bound by residues His565, His569, Cys674, and His678.

This sequence belongs to the class-II aminoacyl-tRNA synthetase family. Zn(2+) serves as cofactor.

It localises to the cytoplasm. The catalysed reaction is tRNA(Ala) + L-alanine + ATP = L-alanyl-tRNA(Ala) + AMP + diphosphate. Catalyzes the attachment of alanine to tRNA(Ala) in a two-step reaction: alanine is first activated by ATP to form Ala-AMP and then transferred to the acceptor end of tRNA(Ala). Also edits incorrectly charged Ser-tRNA(Ala) and Gly-tRNA(Ala) via its editing domain. This Erythrobacter litoralis (strain HTCC2594) protein is Alanine--tRNA ligase.